Reading from the N-terminus, the 182-residue chain is Ribosomal RNA small subunit methyltransferase G (182 aa).

S-adenosyl-L-methionine-binding positions include glycine 58, phenylalanine 63, 109 to 110 (IE), and arginine 123.

It belongs to the methyltransferase superfamily. RNA methyltransferase RsmG family.

It localises to the cytoplasm. The enzyme catalyses guanosine(527) in 16S rRNA + S-adenosyl-L-methionine = N(7)-methylguanosine(527) in 16S rRNA + S-adenosyl-L-homocysteine. In terms of biological role, specifically methylates the N7 position of guanine in position 527 of 16S rRNA. The sequence is that of Ribosomal RNA small subunit methyltransferase G from Campylobacter fetus subsp. fetus (strain 82-40).